The chain runs to 158 residues: Transcriptional regulator MraZ (158 aa).

2 consecutive SpoVT-AbrB domains span residues 5–52 (IYET…TFSS) and 91–134 (AVEC…SQAE).

The protein belongs to the MraZ family. Forms oligomers.

Its subcellular location is the cytoplasm. The protein resides in the nucleoid. The polypeptide is Transcriptional regulator MraZ (Geobacter sulfurreducens (strain ATCC 51573 / DSM 12127 / PCA)).